The primary structure comprises 621 residues: Rab proteins geranylgeranyltransferase component A 2 (621 aa).

Positions V113–A171 are disordered. Over residues D115–L125 the composition is skewed to polar residues. Over residues P155 to L166 the composition is skewed to basic and acidic residues.

It belongs to the Rab GDI family. Monomer. Heterotrimer composed of RABGGTA, RABGGTB and CHML; within this trimer, RABGGTA and RABGGTB form the catalytic component B, while CHML (component A) mediates Rab protein binding. Interacts with RAB1A, RAB7A and RAB27A, but has much lower affinity for RAB1A, RAB7A and RAB27A than CHM. Interacts with the non-phosphorylated forms of RAB3A, RAB3B, RAB3C, RAB3D, RAB5B, RAB5C, RAB8A, RAB8B, RAB10, RAB12, RAB35, and RAB43.

It is found in the cytoplasm. Its subcellular location is the cytosol. Its function is as follows. Substrate-binding subunit (component A) of the Rab geranylgeranyltransferase (GGTase) complex. Binds unprenylated Rab proteins and presents the substrate peptide to the catalytic component B. The component A is thought to be regenerated by transferring its prenylated Rab back to the donor membrane. Less effective than CHM in supporting prenylation of Rab3 family. The protein is Rab proteins geranylgeranyltransferase component A 2 (Chml) of Mus musculus (Mouse).